Here is a 99-residue protein sequence, read N- to C-terminus: uncharacterized protein (99 aa).

It belongs to the HesB/IscA family.

This is an uncharacterized protein from Staphylococcus haemolyticus (strain JCSC1435).